The following is a 432-amino-acid chain: UDP-N-acetylglucosamine 1-carboxyvinyltransferase (432 aa).

Position 22-23 (22-23 (KN)) interacts with phosphoenolpyruvate. Residue arginine 92 coordinates UDP-N-acetyl-alpha-D-glucosamine. Catalysis depends on cysteine 116, which acts as the Proton donor. Cysteine 116 bears the 2-(S-cysteinyl)pyruvic acid O-phosphothioketal mark. UDP-N-acetyl-alpha-D-glucosamine is bound by residues 121 to 125 (RPVDQ), aspartate 307, and isoleucine 329.

Belongs to the EPSP synthase family. MurA subfamily.

It localises to the cytoplasm. The enzyme catalyses phosphoenolpyruvate + UDP-N-acetyl-alpha-D-glucosamine = UDP-N-acetyl-3-O-(1-carboxyvinyl)-alpha-D-glucosamine + phosphate. It participates in cell wall biogenesis; peptidoglycan biosynthesis. Cell wall formation. Adds enolpyruvyl to UDP-N-acetylglucosamine. The protein is UDP-N-acetylglucosamine 1-carboxyvinyltransferase of Psychrobacter sp. (strain PRwf-1).